Reading from the N-terminus, the 264-residue chain is Ribosomal RNA small subunit methyltransferase J (264 aa).

S-adenosyl-L-methionine contacts are provided by residues 111–112, 127–128, and Asp180; these read RD and ER.

Belongs to the methyltransferase superfamily. RsmJ family.

The protein resides in the cytoplasm. It carries out the reaction guanosine(1516) in 16S rRNA + S-adenosyl-L-methionine = N(2)-methylguanosine(1516) in 16S rRNA + S-adenosyl-L-homocysteine + H(+). In terms of biological role, specifically methylates the guanosine in position 1516 of 16S rRNA. The sequence is that of Ribosomal RNA small subunit methyltransferase J from Alkalilimnicola ehrlichii (strain ATCC BAA-1101 / DSM 17681 / MLHE-1).